Consider the following 101-residue polypeptide: Ribonuclease kappa-A (101 aa).

2 helical membrane passes run 13-33 (ACGI…GVFF) and 68-88 (VSYN…FSFC).

This sequence belongs to the RNase K family.

It is found in the membrane. In terms of biological role, endoribonuclease which preferentially cleaves ApU and ApG phosphodiester bonds. This is Ribonuclease kappa-A (rnasek-a) from Xenopus laevis (African clawed frog).